The chain runs to 657 residues: Glycogen debranching enzyme (657 aa).

The active-site Nucleophile is the Asp336. The active-site Proton donor is the Glu371. Residues 460 to 479 (ANGEENRDGTNNNYSNNHGK) are disordered.

Belongs to the glycosyl hydrolase 13 family.

It catalyses the reaction Hydrolysis of (1-&gt;6)-alpha-D-glucosidic linkages to branches with degrees of polymerization of three or four glucose residues in limit dextrin.. The protein operates within glycan degradation; glycogen degradation. In terms of biological role, removes maltotriose and maltotetraose chains that are attached by 1,6-alpha-linkage to the limit dextrin main chain, generating a debranched limit dextrin. This chain is Glycogen debranching enzyme, found in Escherichia coli O17:K52:H18 (strain UMN026 / ExPEC).